Here is a 304-residue protein sequence, read N- to C-terminus: Quinolinate synthase (304 aa).

Iminosuccinate is bound by residues histidine 24 and serine 41. Cysteine 86 contacts [4Fe-4S] cluster. Iminosuccinate-binding positions include tyrosine 112–asparagine 114 and serine 129. Cysteine 171 provides a ligand contact to [4Fe-4S] cluster. Iminosuccinate contacts are provided by residues histidine 197 to glutamate 199 and threonine 214. Cysteine 259 contributes to the [4Fe-4S] cluster binding site.

This sequence belongs to the quinolinate synthase family. Type 2 subfamily. [4Fe-4S] cluster serves as cofactor.

Its subcellular location is the cytoplasm. It catalyses the reaction iminosuccinate + dihydroxyacetone phosphate = quinolinate + phosphate + 2 H2O + H(+). It functions in the pathway cofactor biosynthesis; NAD(+) biosynthesis; quinolinate from iminoaspartate: step 1/1. Catalyzes the condensation of iminoaspartate with dihydroxyacetone phosphate to form quinolinate. The sequence is that of Quinolinate synthase from Methanosarcina barkeri (strain Fusaro / DSM 804).